The sequence spans 66 residues: uncharacterized protein (66 aa).

The region spanning 5 to 59 (LKYYRALHNLTQEDLAKKLGVSRQTIIAIEKGKYDPSLKLAFKIAKFFGVKIEDI) is the HTH cro/C1-type domain. The H-T-H motif DNA-binding region spans 16–35 (QEDLAKKLGVSRQTIIAIEK).

This is an uncharacterized protein from Methanocaldococcus jannaschii (strain ATCC 43067 / DSM 2661 / JAL-1 / JCM 10045 / NBRC 100440) (Methanococcus jannaschii).